A 29-amino-acid polypeptide reads, in one-letter code: Cytochrome b6-f complex subunit 8 (29 aa).

A helical transmembrane segment spans residues 3–23 (LITITWASVMVAFTFSLSLVV).

The protein belongs to the PetN family. As to quaternary structure, the 4 large subunits of the cytochrome b6-f complex are cytochrome b6, subunit IV (17 kDa polypeptide, PetD), cytochrome f and the Rieske protein, while the 4 small subunits are PetG, PetL, PetM and PetN. The complex functions as a dimer.

It is found in the plastid. The protein localises to the chloroplast thylakoid membrane. Functionally, component of the cytochrome b6-f complex, which mediates electron transfer between photosystem II (PSII) and photosystem I (PSI), cyclic electron flow around PSI, and state transitions. The sequence is that of Cytochrome b6-f complex subunit 8 from Chaetosphaeridium globosum (Charophycean green alga).